The sequence spans 326 residues: Protein MICROTUBULE BINDING PROTEIN 2C (326 aa).

Polar residues-rich tracts occupy residues 1 to 15 (MYEQ…QSDS) and 34 to 46 (PHQS…SGNE). Disordered stretches follow at residues 1–46 (MYEQ…SGNE) and 71–132 (ERSS…KALA). The stretch at 132–183 (AGAEKEEMSRLREQVNDLQTKLSEKEEVLKSMEMSKNQVNEIQEKLEATNRL) forms a coiled coil.

This sequence belongs to the microtubule binding protein 2C family. In terms of assembly, interacts with STM. Expressed in seedlings, roots, flowers and developing ovules.

It localises to the cytoplasm. Its subcellular location is the cytoskeleton. In terms of biological role, prevents homeodomain proteins (e.g. STM) association to plasmodesmata and, consequently, cell-to-cell transport. Binds to RNA. Alters STM RNA binding capacity. Regulates cytoskeleton (e.g. actin) organization that determinates cell shape. Regulates stomata patterning and drought tolerance. Involved in restricting tobamovirus (e.g. oilseed rape mosaic virus) infectivity, probably by interfering with cell-to-cell virus movement. This chain is Protein MICROTUBULE BINDING PROTEIN 2C, found in Arabidopsis thaliana (Mouse-ear cress).